A 311-amino-acid chain; its full sequence is E3 ubiquitin-protein ligase RNF126 (311 aa).

Ala-2 is modified (N-acetylalanine). Ser-5 is modified (phosphoserine). A required for interaction with BAG6 region spans residues 5–100; the sequence is SPHPGRYFCH…FEIPTFPPGA (96 aa). The Zn(2+) site is built by Cys-13, Cys-16, Cys-29, and Cys-32. Residues 13–32 form a C4-type zinc finger; the sequence is CHCCSVEIVPRLPDYICPRC. 2 disordered regions span residues 42-64 and 94-132; these read EETRSTENGSAPSTAPTDQSRPP and PTFPPGAQADDGRDPESRRERDHPSRHRYGARQPRARLT. The segment covering 47–61 has biased composition (polar residues); that stretch reads TENGSAPSTAPTDQS. Over residues 103 to 116 the composition is skewed to basic and acidic residues; the sequence is DDGRDPESRRERDH. The segment covering 117-132 has biased composition (basic residues); that stretch reads PSRHRYGARQPRARLT. Residues 200 to 304 form a sufficient for interaction with AICDA region; it reads TGPPPADKEK…SSSSSSSPSN (105 aa). The segment at 229-270 adopts an RING-type zinc-finger fold; the sequence is CPVCKDDYALGERVRQLPCNHLFHDGCIVPWLEQHDSCPVCR. Residues 277 to 311 form a disordered region; sequence NTATNPPGLTGVSFSSSSSSSSSSSPSNENATSNS. Over residues 289–311 the composition is skewed to low complexity; that stretch reads SFSSSSSSSSSSSPSNENATSNS.

As to quaternary structure, interacts with CCDC50, EGFR, FLT3 and SCAMP3. Interacts with BAG6 (via ubiquitin-like domain); required for BAG6-dependent ubiquitination of proteins mislocalized to the cytosol. Interacts with CDKN1A. Interacts with AICDA. Post-translationally, ubiquitinated. May undergo autoubiquitination. Highly expressed in liver and testis.

It localises to the cytoplasm. The protein resides in the nucleus. The enzyme catalyses S-ubiquitinyl-[E2 ubiquitin-conjugating enzyme]-L-cysteine + [acceptor protein]-L-lysine = [E2 ubiquitin-conjugating enzyme]-L-cysteine + N(6)-ubiquitinyl-[acceptor protein]-L-lysine.. It functions in the pathway protein modification; protein ubiquitination. E3 ubiquitin-protein ligase that mediates ubiquitination oF target proteins. Depending on the associated E2 ligase, mediates 'Lys-27'-, 'Lys-29'-, 'Lys-48'- and/or 'Lys-63'-linked polyubiquitination of substrates. Part of a BAG6-dependent quality control process ensuring that proteins of the secretory pathway that are mislocalized to the cytosol are degraded by the proteasome. Probably acts by providing the ubiquitin ligase activity associated with the BAG6 complex and be responsible for ubiquitination of the hydrophobic mislocalized proteins and their targeting to the proteasome. May also play a role in the endosomal recycling of IGF2R, the cation-independent mannose-6-phosphate receptor. May play a role in the endosomal sorting and degradation of several membrane receptors including EGFR, FLT3, MET and CXCR4, by mediating their ubiquitination. By ubiquitinating CDKN1A/p21 and targeting it for degradation, may also promote cell proliferation. May monoubiquitinate AICDA. Acts as a regulator of DNA repair by mediating 'Lys-27'- and 'Lys-29'-linked polyubiquitination of MRE11, thereby promoting the exonuclease activity of MRE11. The chain is E3 ubiquitin-protein ligase RNF126 from Homo sapiens (Human).